A 328-amino-acid polypeptide reads, in one-letter code: Beta-ketoacyl-[acyl-carrier-protein] synthase III (328 aa).

Residues Cys-122 and His-255 contribute to the active site. Residues 256–260 form an ACP-binding region; that stretch reads QANIR. Residue Asn-285 is part of the active site.

This sequence belongs to the thiolase-like superfamily. FabH family. As to quaternary structure, homodimer.

Its subcellular location is the cytoplasm. The catalysed reaction is malonyl-[ACP] + acetyl-CoA + H(+) = 3-oxobutanoyl-[ACP] + CO2 + CoA. The protein operates within lipid metabolism; fatty acid biosynthesis. Functionally, catalyzes the condensation reaction of fatty acid synthesis by the addition to an acyl acceptor of two carbons from malonyl-ACP. Catalyzes the first condensation reaction which initiates fatty acid synthesis and may therefore play a role in governing the total rate of fatty acid production. Possesses both acetoacetyl-ACP synthase and acetyl transacylase activities. Its substrate specificity determines the biosynthesis of branched-chain and/or straight-chain of fatty acids. The chain is Beta-ketoacyl-[acyl-carrier-protein] synthase III from Janthinobacterium sp. (strain Marseille) (Minibacterium massiliensis).